The primary structure comprises 349 residues: Histidinol-phosphate aminotransferase (349 aa).

Lys-206 is modified (N6-(pyridoxal phosphate)lysine).

Belongs to the class-II pyridoxal-phosphate-dependent aminotransferase family. Histidinol-phosphate aminotransferase subfamily. In terms of assembly, homodimer. Requires pyridoxal 5'-phosphate as cofactor.

The catalysed reaction is L-histidinol phosphate + 2-oxoglutarate = 3-(imidazol-4-yl)-2-oxopropyl phosphate + L-glutamate. It functions in the pathway amino-acid biosynthesis; L-histidine biosynthesis; L-histidine from 5-phospho-alpha-D-ribose 1-diphosphate: step 7/9. This Streptococcus mutans serotype c (strain ATCC 700610 / UA159) protein is Histidinol-phosphate aminotransferase.